The chain runs to 214 residues: UPF0502 protein Spro_2794 (214 aa).

Belongs to the UPF0502 family.

This is UPF0502 protein Spro_2794 from Serratia proteamaculans (strain 568).